A 379-amino-acid polypeptide reads, in one-letter code: 2-methylcitrate synthase (379 aa).

Substrate is bound at residue histidine 187. Histidine 222 is an active-site residue. Residue 264-268 (KVMGF) participates in CoA binding. The active site involves histidine 270. Arginine 279 is a binding site for substrate. Aspartate 321 is a catalytic residue. Substrate contacts are provided by arginine 346 and arginine 365.

The protein belongs to the citrate synthase family. Homodimer.

It carries out the reaction propanoyl-CoA + oxaloacetate + H2O = (2S,3S)-2-methylcitrate + CoA + H(+). It catalyses the reaction oxaloacetate + acetyl-CoA + H2O = citrate + CoA + H(+). Its pathway is organic acid metabolism; propanoate degradation. It participates in carbohydrate metabolism; tricarboxylic acid cycle; isocitrate from oxaloacetate: step 1/2. In terms of biological role, involved in the catabolism of short chain fatty acids (SCFA) via the tricarboxylic acid (TCA)(acetyl degradation route) and via the 2-methylcitrate cycle I (propionate degradation route). Catalyzes the Claisen condensation of propionyl-CoA and oxaloacetate (OAA) to yield 2-methylcitrate (2-MC) and CoA. Also catalyzes the condensation of oxaloacetate with acetyl-CoA but with a lower specificity. In Antarctic bacterium DS2-3R, this protein is 2-methylcitrate synthase (gltA).